Consider the following 322-residue polypeptide: Quinolinate synthase (322 aa).

2 residues coordinate iminosuccinate: histidine 37 and serine 54. Cysteine 99 contacts [4Fe-4S] cluster. Residues 125 to 127 and serine 142 each bind iminosuccinate; that span reads YVN. Cysteine 185 is a binding site for [4Fe-4S] cluster. Residues 211–213 and threonine 228 each bind iminosuccinate; that span reads HPE. Residue cysteine 278 coordinates [4Fe-4S] cluster.

The protein belongs to the quinolinate synthase family. Type 2 subfamily. The cofactor is [4Fe-4S] cluster.

It is found in the cytoplasm. The enzyme catalyses iminosuccinate + dihydroxyacetone phosphate = quinolinate + phosphate + 2 H2O + H(+). It functions in the pathway cofactor biosynthesis; NAD(+) biosynthesis; quinolinate from iminoaspartate: step 1/1. Its function is as follows. Catalyzes the condensation of iminoaspartate with dihydroxyacetone phosphate to form quinolinate. This chain is Quinolinate synthase, found in Chlorobaculum tepidum (strain ATCC 49652 / DSM 12025 / NBRC 103806 / TLS) (Chlorobium tepidum).